The following is a 604-amino-acid chain: Glutamine--fructose-6-phosphate aminotransferase [isomerizing] (604 aa).

The active-site Nucleophile; for GATase activity is the Cys2. Residues 2-218 (CGIVGVVGNR…DKELVVLTKD (217 aa)) enclose the Glutamine amidotransferase type-2 domain. SIS domains are found at residues 284–423 (IVKS…ANGK) and 456–594 (VANL…VDKP). Residue Lys599 is the For Fru-6P isomerization activity of the active site.

As to quaternary structure, homodimer.

The protein localises to the cytoplasm. It catalyses the reaction D-fructose 6-phosphate + L-glutamine = D-glucosamine 6-phosphate + L-glutamate. Catalyzes the first step in hexosamine metabolism, converting fructose-6P into glucosamine-6P using glutamine as a nitrogen source. The protein is Glutamine--fructose-6-phosphate aminotransferase [isomerizing] of Streptococcus mutans serotype c (strain ATCC 700610 / UA159).